The following is a 53-amino-acid chain: uncharacterized protein (53 aa).

A helical transmembrane segment spans residues 20–42 (ILFPVLLVFDTILIVVGIALILF).

The protein localises to the membrane. This is an uncharacterized protein from Archaeoglobus fulgidus (strain ATCC 49558 / DSM 4304 / JCM 9628 / NBRC 100126 / VC-16).